Here is a 408-residue protein sequence, read N- to C-terminus: Putative UPF0496 protein 2 (408 aa).

Transmembrane regions (helical) follow at residues 224–244 and 252–272; these read RIAR…AIVA and ALVG…GAAR. Residues 385–408 form a disordered region; it reads MARGLPPPSPATVTTTSEERLTSS.

The protein belongs to the UPF0496 family.

The protein resides in the membrane. The sequence is that of Putative UPF0496 protein 2 from Oryza sativa subsp. japonica (Rice).